The chain runs to 2462 residues: Piezo-type mechanosensitive ion channel homolog (2462 aa).

A run of 19 helical transmembrane segments spans residues 5–25, 27–47, 57–77, 105–125, 163–183, 207–227, 248–268, 325–345, 347–367, 374–394, 404–424, 467–487, 502–522, 554–574, 653–673, 694–714, 730–750, 792–812, and 826–846; these read LVGF…WSVI, FLDL…GYRF, IFIF…IWAA, TVMY…ADIY, AVQL…FFIG, LYIY…PINF, EGPD…LSYV, FFTY…FHFA, LCAF…PSLF, GLLL…NVAF, FGLG…FLYL, LIFL…IFFL, SLIL…IDLV, IALL…LFSF, VYLV…LLWI, AVLV…QLWL, APLL…QLYS, FYAS…GLVI, and SFLI…LWGM. Residues 927–947 are disordered; that stretch reads ASVSSSNGENPSSTDHASISM. Residues 928-939 show a composition bias toward low complexity; that stretch reads SVSSSNGENPSS. 8 helical membrane-spanning segments follow: residues 1027-1047, 1050-1070, 1078-1098, 1143-1160, 1204-1224, 1228-1248, 1260-1280, and 1310-1330; these read FWIE…ALLL, FALL…CVLL, LWPV…VATW, TLIS…KLRA, LYCY…TGTL, ILHL…LEIL, VYNF…VGNF, and SALV…MFSS. A coiled-coil region spans residues 1347 to 1400; the sequence is AIVREQEKKAARKTEQLQQIREAEEKKRQRNLQVEKMKSEMLNLRVQLHRMNSD. A disordered region spans residues 1543 to 1583; that stretch reads SDTNEQSSVDDEVYDEMESQKRKHTPFERSTSLQSDRSSDG. Residues 1550–1559 are compositionally biased toward acidic residues; that stretch reads SVDDEVYDEM. Positions 1570 to 1583 are enriched in polar residues; it reads ERSTSLQSDRSSDG. 8 helical membrane-spanning segments follow: residues 1611-1631, 1647-1667, 1916-1936, 1956-1976, 1984-2004, 2012-2032, 2130-2150, and 2369-2389; these read FIIA…AALF, VIML…QIII, YIFG…QSVI, FVII…IYLC, VYYL…AWSI, AGLA…LQAI, GICL…MYSS, and FLGD…FVLA.

The protein belongs to the PIEZO (TC 1.A.75) family.

Its subcellular location is the membrane. Its function is as follows. Pore-forming subunit of a mechanosensitive non-specific cation channel, that conducts both sodium and potassium ions. The sequence is that of Piezo-type mechanosensitive ion channel homolog from Arabidopsis thaliana (Mouse-ear cress).